The following is a 498-amino-acid chain: Cytochrome P450 monooxygenase idtP (498 aa).

Positions 1 to 20 are cleaved as a signal peptide; sequence MFLLHILAIGACLLWYFVRS. A heme-binding site is contributed by Cys-439.

Belongs to the cytochrome P450 family. The cofactor is heme.

It functions in the pathway secondary metabolite biosynthesis. Functionally, cytochrome P450 monooxygenase; part of the gene cluster that mediates the biosynthesis of paspalitrems, indole-diterpene (IDT) mycotoxins that are potent tremorgens in mammals. The geranylgeranyl diphosphate (GGPP) synthase idtG is proposed to catalyze the first step in IDT biosynthesis via catalysis of a series of iterative condensations of isopentenyl diphosphate (IPP) with dimethylallyl diphosphate (DMAPP), geranyl diphosphate (GPP), and farnesyl diphosphate (FPP), to form GGPP. Condensation of indole-3-glycerol phosphate with GGPP by the prenyltransferase idtC then forms 3-geranylgeranylindole (3-GGI). Epoxidation of the two terminal alkenes of the geranylgeranyl moiety by the FAD-dependent monooxygenase idtM, and cyclization by the terpene cyclase idtB then leads to the production of paspaline. The cytochrome P450 monooxygenase idtP then catalyzes oxidative elimination of the pendant methyl group at C-12 of paspaline and generates the C-10 ketone to yield 13-desoxypaxilline. The cytochrome P450 monooxygenase idtQ may catalyze the C-13 oxidation of 13-desoxypaxilline to afford paxilline. Considering that both paspalicine and paxilline were detected in C.paspali, idtQ also catalyzes the formation of paspalinine from 13-desoxypaxilline via paspalicine as an intermediate. Finally, the alpha-prenyltransferase idtF prenylates paspalinine at the C-20 or the C-21 positions to yield paspalitrems A and C, respectively. The hydroxylation of paspalitrem A at C-32 by a still unknown oxidase affords paspalitrem B. The polypeptide is Cytochrome P450 monooxygenase idtP (Claviceps paspali (Rye ergot fungus)).